The sequence spans 385 residues: Phospho-N-acetylmuramoyl-pentapeptide-transferase (385 aa).

A run of 10 helical transmembrane segments spans residues 23–43, 79–99, 103–123, 135–155, 186–206, 218–238, 258–278, 282–302, 307–327, and 362–382; these read FITV…LGAG, MGGI…GAVA, VWLS…DDYV, AWYK…VLYF, LGVD…VTAV, GLTT…VYVS, LTVF…YNGY, VFMG…TILM, LLLP…IVQT, and KIVT…LLIL.

This sequence belongs to the glycosyltransferase 4 family. MraY subfamily. Mg(2+) is required as a cofactor.

The protein resides in the cell inner membrane. It catalyses the reaction UDP-N-acetyl-alpha-D-muramoyl-L-alanyl-gamma-D-glutamyl-meso-2,6-diaminopimeloyl-D-alanyl-D-alanine + di-trans,octa-cis-undecaprenyl phosphate = di-trans,octa-cis-undecaprenyl diphospho-N-acetyl-alpha-D-muramoyl-L-alanyl-D-glutamyl-meso-2,6-diaminopimeloyl-D-alanyl-D-alanine + UMP. It participates in cell wall biogenesis; peptidoglycan biosynthesis. Catalyzes the initial step of the lipid cycle reactions in the biosynthesis of the cell wall peptidoglycan: transfers peptidoglycan precursor phospho-MurNAc-pentapeptide from UDP-MurNAc-pentapeptide onto the lipid carrier undecaprenyl phosphate, yielding undecaprenyl-pyrophosphoryl-MurNAc-pentapeptide, known as lipid I. The polypeptide is Phospho-N-acetylmuramoyl-pentapeptide-transferase (Salinibacter ruber (strain DSM 13855 / M31)).